The chain runs to 1112 residues: Zinc finger protein 654 (1112 aa).

Positions 482 to 514 (PSSSLKKRVDQQSVEEDQSTGETDPDDASVVQP) are disordered. Residues 494–508 (SVEEDQSTGETDPDD) show a composition bias toward acidic residues. 5 consecutive C2H2-type zinc fingers follow at residues 566-588 (FACV…LKNH), 738-763 (FKCP…RTVH), 779-801 (GKCK…LNRH), 807-831 (YFCL…TKSH), and 836-860 (AQCS…EAQH). Disordered regions lie at residues 885 to 906 (FSNE…KYST) and 997 to 1018 (VESQ…NLTS). Composition is skewed to polar residues over residues 886–899 (SNEN…VSTS) and 1002–1018 (HSAL…NLTS). 2 positions are modified to phosphoserine: Ser1107 and Ser1111.

It belongs to the krueppel C2H2-type zinc-finger protein family.

It localises to the nucleus. Its function is as follows. May be involved in transcriptional regulation. The chain is Zinc finger protein 654 from Mus musculus (Mouse).